The primary structure comprises 631 residues: Biotin--protein ligase (631 aa).

One can recognise a BPL/LPL catalytic domain in the interval 341–553; it reads ELYAKLINGC…QFDRYHRLLL (213 aa).

It belongs to the biotin--protein ligase family. In terms of assembly, monomer.

The protein localises to the cytoplasm. It catalyses the reaction apo-[methylmalonyl-CoA:pyruvate carboxytransferase] + biotin + ATP = holo-[methylmalonyl-CoA:pyruvate carboxytransferase] + AMP + diphosphate + H(+). It carries out the reaction apo-[propionyl-CoA:carbon-dioxide ligase (ADP-forming)] + biotin + ATP = holo-[propionyl-CoA:carbon-dioxide ligase (ADP-forming)] + AMP + diphosphate + H(+). The enzyme catalyses apo-[3-methylcrotonoyl-CoA:carbon-dioxide ligase (ADP-forming)] + biotin + ATP = holo-[3-methylcrotonoyl-CoA:carbon-dioxide ligase (ADP-forming)] + AMP + diphosphate + H(+). The catalysed reaction is biotin + L-lysyl-[protein] + ATP = N(6)-biotinyl-L-lysyl-[protein] + AMP + diphosphate + H(+). In terms of biological role, post-translational modification of specific protein by attachment of biotin. Acts on various carboxylases such as acetyl-CoA-carboxylase, pyruvate carboxylase, propionyl CoA carboxylase, and 3-methylcrotonyl CoA carboxylase. The polypeptide is Biotin--protein ligase (bpl1) (Schizosaccharomyces pombe (strain 972 / ATCC 24843) (Fission yeast)).